A 190-amino-acid chain; its full sequence is Imidazoleglycerol-phosphate dehydratase (190 aa).

This sequence belongs to the imidazoleglycerol-phosphate dehydratase family.

Its subcellular location is the cytoplasm. The catalysed reaction is D-erythro-1-(imidazol-4-yl)glycerol 3-phosphate = 3-(imidazol-4-yl)-2-oxopropyl phosphate + H2O. It participates in amino-acid biosynthesis; L-histidine biosynthesis; L-histidine from 5-phospho-alpha-D-ribose 1-diphosphate: step 6/9. This chain is Imidazoleglycerol-phosphate dehydratase, found in Aliarcobacter butzleri (strain RM4018) (Arcobacter butzleri).